A 421-amino-acid polypeptide reads, in one-letter code: 3-isopropylmalate dehydratase large subunit (421 aa).

Residues Cys-300, Cys-360, and Cys-363 each coordinate [4Fe-4S] cluster.

Belongs to the aconitase/IPM isomerase family. LeuC type 2 subfamily. Heterodimer of LeuC and LeuD. Requires [4Fe-4S] cluster as cofactor.

It carries out the reaction (2R,3S)-3-isopropylmalate = (2S)-2-isopropylmalate. The protein operates within amino-acid biosynthesis; L-leucine biosynthesis; L-leucine from 3-methyl-2-oxobutanoate: step 2/4. In terms of biological role, catalyzes the isomerization between 2-isopropylmalate and 3-isopropylmalate, via the formation of 2-isopropylmaleate. This chain is 3-isopropylmalate dehydratase large subunit, found in Lachnoclostridium phytofermentans (strain ATCC 700394 / DSM 18823 / ISDg) (Clostridium phytofermentans).